A 1143-amino-acid polypeptide reads, in one-letter code: MEAAAMAVTAATGALAPVLVKLAALLDDGECNLLEGSRSDAEFIRSELEAVHSLLTPNILGRMGDDDAACKDGLIAEVRELSYDLDDAVDDFLELNFEQRRSASPFGELKARVEERVSNRFSDWKLPAASLPPSSVHRRAGLPPPDAGLVGMHKRKEELIELLEQGSSDASRWRKRKPHVPLRIMGGEMQKIVFKIPMVDDKSRTKAMSLVASTVGVHSVAIAGDLRDEVVVVGDGIDSINLVSALRKKVGPAMFLEVSQAKEDVKEITAMLAPVKSICEFHEVKTICILGLPGGGKTTIARVLYHALGTQFQCRVFASISPSSSPSPNLTETLADIFAQAQLGVTDTLSTPYGGSGTGRALQQHLIDNISAFLLNKKYLIVIDDIWHWEEWEVIRKSIPKNDLGGRIIMTTRLNSIAEKCHTDDNDVFVYEVGDLDNNDAWSLSWGIATKSGAGNRIGTGEDNSCYDIVNMCYGMPLALIWLSSALVGEIEELGGAEVKKCRDLRHIEDGILDIPSLQPLAESLCLGYNHLPLYLRTLLLYCSAYHWSNRIERGRLVRRWIAEGFVSEEKEAEGYFGELINRGWITQHGDNNSYNYYEIHPVMLAFLRCKSKEYNFLTCLGLGSDTSTSASSPRLIRRLSLQGGYPVDCLSSMSMDVSHTCSLVVLGDVARPKGIPFYMFKRLRVLDLEDNKDIQDSHLQGICEQLSLRVRYLGLKGTRIRKLPQEMRKLKHLEILYVGSTRISELPQEIGELKHLRILDVRNTDITELPLQIRELQHLHTLDVRNTPISELPPQVGKLQNLKIMCVRSTGVRELPKEIGELNHLQTLDVRNTRVRELPWQAGQISQSLRVLAGDSGDGVRLPEGVCEALINGIPGATRAKCREVLSIAIIDRFGPPLVGIFKVPGSHMRIPKMIKDHFRVLSCLDIRLCHKLEDDDQKFLAEMPNLQTLVLRFEALPRQPITINGTGFQMLESFRVDSRVPRIAFHEDAMPNLKLLEFKFYAGPASNDAIGITNLKSLQKVVFRCSPWYKSDAPGISATIDVVKKEAEEHPNRPITLLINAGYKEISTESHGSSENIAGSSGIDTEPAQAQHDNLPAVRDDYKGKGILLDGRCPTCGRATKIEEETQDRVADIEIQTETTS.

The tract at residues 1–190 (MEAAAMAVTA…PLRIMGGEMQ (190 aa)) is structured coiled coil (CC) domain. In terms of domain architecture, HMA spans 189 to 258 (MQKIVFKIPM…KVGPAMFLEV (70 aa)). The segment at 191-264 (KIVFKIPMVD…FLEVSQAKED (74 aa)) is HMA-like domain. The region spanning 282-570 (HEVKTICILG…WIAEGFVSEE (289 aa)) is the NB-ARC domain. 10 LRR repeats span residues 681–706 (FKRL…ICEQ), 708–731 (SLRV…MRKL), 732–754 (KHLE…IGEL), 756–777 (HLRI…IREL), 778–800 (QHLH…VGKL), 802–823 (NLKI…IGEL), 824–848 (NHLQ…QISQ), 945–968 (MPNL…INGT), 979–1002 (DSRV…EFKF), and 1004–1027 (AGPA…VFRC).

This sequence belongs to the disease resistance NB-LRR family. Interacts with AVR-Pik through its N-terminal part containing the HMA-like domain.

Its function is as follows. Disease resistance (R) protein that specifically recognizes the AVR-Pik effector avirulence protein from M.oryzae. Resistance proteins guard the plant against pathogens that contain an appropriate avirulence protein via an indirect interaction with this avirulence protein. That triggers a defense system including the hypersensitive response, which restricts the pathogen growth. This Oryza sativa subsp. japonica (Rice) protein is Disease resistance protein Piks-1.